A 510-amino-acid chain; its full sequence is MIWHVQNENFILDSTRIFMKAFHLLLFQGSSIFPECILIFGLILLLMIDSTSDQKDRPWFYFISSTSLVISITALLFRWREEPIISFSGNFQTNNFNEIFQFLILLCSTLCIPLSVEYIECTEMAITEFLLFVLTATLGGMFLCGANDLITIFVAPECFSLCSYLLSGYTKRDLRSNEATMKYLLMGGASSSILVHGFSWLYGSSGGEIELQEIVNGLINTQMYNSPGISIALISITVGLGFKLSPAPFHQWTPDVYEGSPTPVVAFLSVTSKVAASASATRILDIPFYFSSNEWHLLLEILAILSMILGNLLAITQTSMKRMLAYSSIGQIGYVIIGIIVGDSNDGYASMITYMLFYISMNLGTFACIVLFGLRTGTDNIRDYAGLYTKDPFLALSLALCLLSLGGLPPLAGFFGKLYLFWCGWQAGLYLLVSIGLLTSVLSIYYYLKIIKLLMTGRNQEITPYVRNYRRSPLRSNNSIELSMTVCVIASTIPGISMNPILAIAQDTLF.

12 helical membrane passes run Leu24–Leu44, Trp59–Trp79, Ile99–Ile119, Met124–Cys144, Leu149–Tyr169, Tyr183–Gly203, Ile229–Phe249, Trp295–Ile315, Met323–Asp343, Tyr354–Leu374, Ala395–Phe415, and Leu418–Leu438.

Belongs to the complex I subunit 2 family. NDH is composed of at least 16 different subunits, 5 of which are encoded in the nucleus.

The protein localises to the plastid. Its subcellular location is the chloroplast thylakoid membrane. The enzyme catalyses a plastoquinone + NADH + (n+1) H(+)(in) = a plastoquinol + NAD(+) + n H(+)(out). It carries out the reaction a plastoquinone + NADPH + (n+1) H(+)(in) = a plastoquinol + NADP(+) + n H(+)(out). In terms of biological role, NDH shuttles electrons from NAD(P)H:plastoquinone, via FMN and iron-sulfur (Fe-S) centers, to quinones in the photosynthetic chain and possibly in a chloroplast respiratory chain. The immediate electron acceptor for the enzyme in this species is believed to be plastoquinone. Couples the redox reaction to proton translocation, and thus conserves the redox energy in a proton gradient. The polypeptide is NAD(P)H-quinone oxidoreductase subunit 2 B, chloroplastic (Agrostis stolonifera (Creeping bentgrass)).